The following is a 167-amino-acid chain: Dimethylamine corrinoid protein 3 (167 aa).

A B12-binding N-terminal domain is found at 1 to 44; sequence MNEVGVRFERGKLFLPHVMMAADAMTAGVNALKDLMPEGSASSK. Residues 45 to 167 form the B12-binding domain; sequence MGVIVNGTVE…AVTKAKELLA (123 aa). H58 serves as a coordination point for methylcob(III)alamin.

It belongs to the methylamine corrinoid protein family.

It functions in the pathway one-carbon metabolism; methanogenesis from dimethylamine. Functionally, acts as a methyl group carrier between MtbB and MtbA. This is Dimethylamine corrinoid protein 3 (mtbC3) from Methanosarcina mazei (strain ATCC BAA-159 / DSM 3647 / Goe1 / Go1 / JCM 11833 / OCM 88) (Methanosarcina frisia).